The sequence spans 540 residues: Probable G-protein coupled receptor 75 (540 aa).

The Extracellular portion of the chain corresponds to 1–46 (MNTSAPLQNVPNATLLNMPPLHGGNSTSLQEGLRDFIHTATLVTCT). Asparagine 2 and asparagine 25 each carry an N-linked (GlcNAc...) asparagine glycan. A helical membrane pass occupies residues 47–67 (FLLAIIFCLGSYGNFIVFLSF). At 68-86 (FDPSFRKFRTNFDFMILNL) the chain is on the cytoplasmic side. Residues 87–107 (SFCDLFICGVTAPMFTFVLFF) traverse the membrane as a helical segment. Over 108-120 (SSASSIPDSFCFT) the chain is Extracellular. The helical transmembrane segment at 121 to 141 (FHLTSSGFVIMSLKMVAVIAL) threads the bilayer. The Cytoplasmic portion of the chain corresponds to 142 to 160 (HRLRMVMGKQPNCTASFSC). The chain crosses the membrane as a helical span at residues 161-181 (ILLLTLLLWATSFTLATLATL). The Extracellular portion of the chain corresponds to 182–205 (RTNKSHLCLPMSSLMDGEGKAILS). N-linked (GlcNAc...) asparagine glycosylation is present at asparagine 184. The chain crosses the membrane as a helical span at residues 206–226 (LYVVDFTFCVAVVSVSYIMIA). Residues 227 to 318 (QTLRKNAQVK…INFSTAKDSK (92 aa)) lie on the Cytoplasmic side of the membrane. Residues 319–339 (AVVTCVVIVLSVLVCCLPLGI) traverse the membrane as a helical segment. Over 340 to 350 (SLVQMVLSDNG) the chain is Extracellular. A helical transmembrane segment spans residues 351–371 (SFILYQFELFGFTLIFFKSGL). The Cytoplasmic portion of the chain corresponds to 372–540 (NPFIYSRNSA…SAKQIPIPSV (169 aa)). Residues 443–475 (DQACGPSHSKESAASPKVSAGHQPCGQSSSTPI) form a disordered region.

The protein belongs to the G-protein coupled receptor 1 family. Highly expressed in brain and heart. Also detected in skeletal muscle, liver and kidney. Also expressed by islet cells (at protein level).

It localises to the cell membrane. G protein-coupled receptor that is activated by the chemokine CCL5/RANTES. Probably coupled to heterotrimeric Gq proteins, it stimulates inositol trisphosphate production and calcium mobilization upon activation. Together with CCL5/RANTES, may play a role in neuron survival through activation of a downstream signaling pathway involving the PI3, Akt and MAP kinases. CCL5/RANTES may also regulate insulin secretion by pancreatic islet cells through activation of this receptor. The chain is Probable G-protein coupled receptor 75 (Gpr75) from Mus musculus (Mouse).